The primary structure comprises 258 residues: Hydroxyacylglutathione hydrolase (258 aa).

Histidine 55, histidine 57, aspartate 59, histidine 60, histidine 115, aspartate 132, and histidine 170 together coordinate Zn(2+).

This sequence belongs to the metallo-beta-lactamase superfamily. Glyoxalase II family. In terms of assembly, monomer. It depends on Zn(2+) as a cofactor.

The catalysed reaction is an S-(2-hydroxyacyl)glutathione + H2O = a 2-hydroxy carboxylate + glutathione + H(+). It functions in the pathway secondary metabolite metabolism; methylglyoxal degradation; (R)-lactate from methylglyoxal: step 2/2. Its function is as follows. Thiolesterase that catalyzes the hydrolysis of S-D-lactoyl-glutathione to form glutathione and D-lactic acid. The polypeptide is Hydroxyacylglutathione hydrolase (Shewanella denitrificans (strain OS217 / ATCC BAA-1090 / DSM 15013)).